The primary structure comprises 317 residues: Proline iminopeptidase (317 aa).

Residues 41–296 (VFIHGGPGGG…ELHIVEGAGH (256 aa)) enclose the AB hydrolase-1 domain. Residue S113 is the Nucleophile of the active site. Residue D268 is part of the active site. H296 acts as the Proton donor in catalysis.

The protein belongs to the peptidase S33 family. As to quaternary structure, monomer.

It is found in the cytoplasm. The enzyme catalyses Release of N-terminal proline from a peptide.. In terms of biological role, specifically catalyzes the removal of N-terminal proline residues from peptides. The sequence is that of Proline iminopeptidase (pip) from Serratia marcescens.